A 433-amino-acid polypeptide reads, in one-letter code: MRRRRCDLQPKRTRMCDLQPKRTSMCDLPPKLVGEKILTRIPITSLRAVRSTCKLWNALTKDRVLGKAAAQFLGFMTMDSKVCSVRFHLRRSKEEEEDTMDLSIKQVDLLNQVEISRVYHCDGLLLCVAKDNSRVVVWNPYLGQTRWIRPRTESNIGDSYALGYDINRNHKILRMVQTRNVSVYRYEIYDLRSNSWRVLEVTPNGEMDPNHPLYGVSVKGNTYFFAHEDSSSGEIDEDGDIIDLEDFLLCFDFTTETFGLRLPLPFHSTIDATVTLSCVRDQQLAVLYHNEGLHSDDRFTTVEFWVTTSIEPNSVSWSKFLTVDMRPLALTGVRFDNDMGATFFIDEDEKVAVVFDLDGYLSTESARYHTAFISGKDGFFKPVTLGVAPNVGEPCPRTGHIPTTYRPPLVCSSTYLPSLVQVNQQRKRKERHV.

The F-box domain occupies 23-71 (TSMCDLPPKLVGEKILTRIPITSLRAVRSTCKLWNALTKDRVLGKAAAQ). 2 Kelch repeats span residues 170-216 (HKIL…LYGV) and 286-337 (VLYH…RFDN).

The polypeptide is F-box/kelch-repeat protein At1g24800 (Arabidopsis thaliana (Mouse-ear cress)).